We begin with the raw amino-acid sequence, 267 residues long: MSSLNNEEWDLLISGKKATLQYPIPLLCYPAPEVVSIAQIIDHTQLSLSATGSQIDVLCAEAKEYGFATVCVRPDYVSRAVQYLQGTQVGVTCVIGFHEGTYSTDQKVSEAKRAMQNGASELDMVMNYPWLSEKRYTDVFQDIRAVRLAAKDAILKVILETSQLTADEIIAGCVLSSLAGADYVKTSTGFNGPGASIENVSLMSAVCDSLQSETRVKASGGIRTIEDCVKMVRAGAERLGASAGVKIVNETRLGNRQVDEPMEPTNY.

The active-site Proton donor/acceptor is the D123. The active-site Schiff-base intermediate with acetaldehyde is the K185. Catalysis depends on K217, which acts as the Proton donor/acceptor.

Belongs to the DeoC/FbaB aldolase family. DeoC type 1 subfamily.

The protein resides in the cytoplasm. It catalyses the reaction 2-deoxy-D-ribose 5-phosphate = D-glyceraldehyde 3-phosphate + acetaldehyde. The protein operates within carbohydrate degradation; 2-deoxy-D-ribose 1-phosphate degradation; D-glyceraldehyde 3-phosphate and acetaldehyde from 2-deoxy-alpha-D-ribose 1-phosphate: step 2/2. Functionally, catalyzes a reversible aldol reaction between acetaldehyde and D-glyceraldehyde 3-phosphate to generate 2-deoxy-D-ribose 5-phosphate. The protein is Deoxyribose-phosphate aldolase of Coccidioides immitis (strain RS) (Valley fever fungus).